The sequence spans 83 residues: uncharacterized protein (83 aa).

This is an uncharacterized protein from Synechocystis sp. (strain ATCC 27184 / PCC 6803 / Kazusa).